The primary structure comprises 394 residues: Galactose-3-O-sulfotransferase 2 (394 aa).

Residues 1–8 (MWGSQHRS) are Cytoplasmic-facing. The helical; Signal-anchor for type II membrane protein transmembrane segment at 9-29 (FQVALWFLVLAVFLLVGFLHV) threads the bilayer. The Lumenal portion of the chain corresponds to 30 to 394 (DFRLLIPDKV…TPKDIPFLKK (365 aa)). 4 N-linked (GlcNAc...) asparagine glycosylation sites follow: Asn72, Asn176, Asn284, and Asn326.

The protein belongs to the galactose-3-O-sulfotransferase family.

It localises to the golgi apparatus. It is found in the golgi stack membrane. Its pathway is protein modification; carbohydrate sulfation. Its activity is regulated as follows. Strongly inhibited by Cu(2+) and Zn(2+). Its function is as follows. Transfers a sulfate group to the hydroxyl group at C3 of non-reducing beta-galactosyl residues. Acts both on type 1 (Gal-beta-1,3-GlcNAc) and type 2 (Gal-beta-1,4-GlcNAc) chains with similar efficiency. In Mus musculus (Mouse), this protein is Galactose-3-O-sulfotransferase 2 (Gal3st2).